The primary structure comprises 86 residues: Antitoxin VapB33 (86 aa).

Its function is as follows. Antitoxin component of a type II toxin-antitoxin (TA) system. Upon expression in M.smegmatis neutralizes the effect of cognate toxin VapC33. This is Antitoxin VapB33 (vapB33) from Mycobacterium tuberculosis (strain ATCC 25618 / H37Rv).